Reading from the N-terminus, the 275-residue chain is Tumor necrosis factor receptor superfamily member 14 (275 aa).

A signal peptide spans 1–38 (MEPLPGWGSAPWSQAPTDNTFRLVPCVFLLNLLQRISA). TNFR-Cys repeat units lie at residues 41-75 (SCRQ…GTVC), 77-119 (PCPP…DTVC), and 120-162 (RCIP…DTVC). Cystine bridges form between C42/C53, C54/C67, C57/C75, C78/C93, C96/C111, C99/C119, C121/C138, and C144/C162. N184 and N197 each carry an N-linked (GlcNAc...) asparagine glycan. The chain crosses the membrane as a helical span at residues 211–231 (VVSILLPLVIVGAGIAGFLIC).

Belongs to the tumor necrosis factor receptor superfamily. In terms of assembly, interacts with TRAF2, TRAF3 and TRAF5. Interacts (via CRD1/TNFR-Cys 1) with CD160; this interaction is direct. Interacts (via CRD1/TNFR-Cys 1) with BTLA; this interaction is direct. N-glycosylated. As to expression, expressed at mucosal sites including colon and pulmonary epithelial cells. Expressed in naive T cells.

Its subcellular location is the cell membrane. Functionally, receptor for four distinct ligands: The TNF superfamily members TNFSF14/LIGHT and homotrimeric LTA/lymphotoxin-alpha and the immunoglobulin superfamily members BTLA and CD160, altogether defining a complex stimulatory and inhibitory signaling network. Signals via the TRAF2-TRAF3 E3 ligase pathway to promote immune cell survival and differentiation. Participates in bidirectional cell-cell contact signaling between antigen presenting cells and lymphocytes. In response to ligation of TNFSF14/LIGHT, delivers costimulatory signals to T cells, promoting cell proliferation and effector functions. Interacts with CD160 on NK cells, enhancing IFNG production and anti-tumor immune response. In the context of bacterial infection, acts as a signaling receptor on epithelial cells for CD160 from intraepithelial lymphocytes, triggering the production of antimicrobial proteins and pro-inflammatory cytokines. Upon binding to CD160 on activated CD4+ T cells, down-regulates CD28 costimulatory signaling, restricting memory and alloantigen-specific immune response. May interact in cis (on the same cell) or in trans (on other cells) with BTLA. In cis interactions, appears to play an immune regulatory role inhibiting in trans interactions in naive T cells to maintain a resting state. In trans interactions, can predominate during adaptive immune response to provide survival signals to effector T cells. This Mus musculus (Mouse) protein is Tumor necrosis factor receptor superfamily member 14.